The chain runs to 318 residues: NADH-ubiquinone oxidoreductase chain 1 (318 aa).

9 helical membrane passes run 2 to 22 (FLMNILCLVIPILLAMAFLTL), 37 to 57 (PNIVGPYGLLQPIADAIKLFI), 69 to 89 (LMFTLAPTLAFTLALSLWIPM), 100 to 120 (LGVLFILALSSLAVYSILWSG), 136 to 156 (VAQTISYEVTLAIILLSVMMM), 171 to 191 (HMWLILPLWPLAMMWFISTLA), 231 to 251 (IIMMNALTATLFLGAFHNPLF), 253 to 273 (ELFTVNFITKTLILTAIFLWV), and 293 to 313 (FLPLTLALCMLHVSIPALSAG).

Belongs to the complex I subunit 1 family. In terms of assembly, core subunit of respiratory chain NADH dehydrogenase (Complex I) which is composed of 45 different subunits.

The protein localises to the mitochondrion inner membrane. The enzyme catalyses a ubiquinone + NADH + 5 H(+)(in) = a ubiquinol + NAD(+) + 4 H(+)(out). Its function is as follows. Core subunit of the mitochondrial membrane respiratory chain NADH dehydrogenase (Complex I) which catalyzes electron transfer from NADH through the respiratory chain, using ubiquinone as an electron acceptor. Essential for the catalytic activity and assembly of complex I. The protein is NADH-ubiquinone oxidoreductase chain 1 (MT-ND1) of Zaedyus pichiy (Pichi).